Reading from the N-terminus, the 74-residue chain is MAKKFDFNQGLIDLEKIVKTMESGDLSLENSLDYFSKGVALTKLCQSALNEAEQKIFMLTEQDNYTNENPLKDL.

The protein belongs to the XseB family. In terms of assembly, heterooligomer composed of large and small subunits.

It localises to the cytoplasm. The enzyme catalyses Exonucleolytic cleavage in either 5'- to 3'- or 3'- to 5'-direction to yield nucleoside 5'-phosphates.. Bidirectionally degrades single-stranded DNA into large acid-insoluble oligonucleotides, which are then degraded further into small acid-soluble oligonucleotides. In Ruthia magnifica subsp. Calyptogena magnifica, this protein is Exodeoxyribonuclease 7 small subunit.